The sequence spans 491 residues: Large ribosomal subunit protein mL101 (rPPR4) (491 aa).

PPR repeat units lie at residues 122-156 (TELT…NITP), 157-191 (SSMS…NVMP), 192-226 (DSYT…GRVA), 228-262 (DWTT…NTQR), 263-293 (DFTA…LRLA), 298-328 (SNVA…WQAN), 333-367 (DIRI…GGKL), and 368-402 (NAKT…GKGD).

This sequence belongs to the PPR family. P subfamily. Component of the mitochondrial ribosome large subunit.

It is found in the mitochondrion. In Arabidopsis thaliana (Mouse-ear cress), this protein is Large ribosomal subunit protein mL101 (rPPR4).